A 485-amino-acid chain; its full sequence is Proline betaine:corrinoid methyltransferase (485 aa).

The protein belongs to the trimethylamine methyltransferase family. In terms of assembly, the proline betaine:THF methyl transfer system is composed of two methyltransferases, MtpB and MtqA, and the corrinoid protein MtqC.

The enzyme catalyses Co(I)-[quaternary-amine-specific corrinoid protein] + L-proline betaine + H(+) = methyl-Co(III)-[quaternary-amine-specific corrinoid protein] + N-methyl-L-proline. Its function is as follows. Involved in the degradation of the quaternary amine L-proline betaine. Component of a corrinoid-dependent methyltransferase system that transfers a methyl group from L-proline betaine to tetrahydrofolate (THF), forming methyl-THF, a key intermediate in the Wood-Ljungdahl acetogenesis pathway. MtpB catalyzes the methylation of the corrinoid protein MtqC, using L-proline betaine as the methyl donor. Shows weak activity with some other quaternary amines, including carnitine, phosphocholine, glycine betaine or betonicine, but cannot methylate free cob(I)alamin. The chain is Proline betaine:corrinoid methyltransferase from Eubacterium limosum.